A 659-amino-acid polypeptide reads, in one-letter code: WD repeat-containing protein 48 homolog (659 aa).

WD repeat units follow at residues 27–66, 73–112, 115–154, 166–205, 208–247, 250–289, 292–331, and 337–376; these read RHRN…SQEP, HHND…CMST, THRD…ALTA, GSKD…KIAK, GHAE…CVQT, VHSE…NSVL, EERA…KLSF, and KGGA…KVED. Residues 592-613 form a disordered region; that stretch reads ASTGNSNSSQNNSQSDANSEGS. Residues 596 to 610 are compositionally biased toward low complexity; the sequence is NSNSSQNNSQSDANS.

The protein belongs to the WD repeat WDR48 family. In terms of assembly, catalytic component of the Usp12-46 deubiquitylase complex consisting of Usp12-46, Wdr20 and Uaf1; regulatory subunit that, together wtih Wdr20, stabilizes Usp12-46. The Usp12-46 deubiquitylase complex associates with arr/arrow; the interaction leads to deubiquitination and stabilization of arr/arrow.

Functionally, regulatory component of the Usp12-46 deubiquitylase complex. activates deubiquitination by increasing the catalytic turnover without increasing the affinity of deubiquitinating enzymes for the substrate. The complex deubiquitylates the wg/wingless-signaling receptor arr/arrow, which stabilizes the receptor and increases its concentration at the cell surface; this enhances the sensitivity of cells to wg/wingless-signal stimulation. This increases the amplitude and spatial range of the signaling response to the wg/wingless morphogen gradient, facilitating the precise concentration-dependent regulation of its target genes. Together with Wdr20 and Usp12-46 required for wg/wingless-mediated signaling in the wing imaginal disc and for wg/wingless-dependent regulation of intestinal stem cell proliferation. The chain is WD repeat-containing protein 48 homolog from Aedes aegypti (Yellowfever mosquito).